The sequence spans 401 residues: MNPSIRLYAWQGTNADGLAVSGQMAGRSPAYVRAGLLRQGILVARLRPAGRAWRWPKRREKTDPAGFSRQLATLLKAGVPLLQAFEVMGRSGCDAAQAALLARLKQDVASGLGLADALQRHPGWFDTLYCNLVRVGEQSGTLDRQLEQLAGMLEQRLALHKKLRKAMIYPLLLLLTGLGVSAVLLLEVIPQFQSLFAGFDAALPAFTQWVIDLSTGLGRHAPVLLVSAVLLAVAARELYRKHRPARLWITQRVLGLPVFGKLLGQAALARFARSLATSYAAGVPLLDALGTVAKASGGELHQQAIQRLRQGMANGQGLNQAMAAEPLFPPLLVQLVAIGESSGTLDQMLEKAASHYEEQVSQALDQLTSLLEPAIVLVLGLLVGGLVVAMYLPIFQLGSLI.

Transmembrane regions (helical) follow at residues 166-186, 215-235, and 375-395; these read AMIY…VLLL, TGLG…AVAA, and IVLV…LPIF.

Belongs to the GSP F family.

It localises to the cell inner membrane. In terms of biological role, involved in the translocation of the type IV pilin (PilA). This Pseudomonas putida (Arthrobacter siderocapsulatus) protein is Type 4 fimbrial assembly protein PilC (pilC).